The sequence spans 152 residues: Outer membrane protein assembly factor BamE (152 aa).

The signal sequence occupies residues 1–32 (MIDQNHDSEEQAQMQKLTRTVTLTVALTLVSG). Residue cysteine 33 is the site of N-palmitoyl cysteine attachment. Cysteine 33 is lipidated: S-diacylglycerol cysteine. The interval 114–152 (IDRHGDFSRPPSVADERGIGPTDSTNARGNLLNARPDDE) is disordered.

The protein belongs to the BamE family. As to quaternary structure, part of the Bam complex.

Its subcellular location is the cell outer membrane. Functionally, part of the outer membrane protein assembly complex, which is involved in assembly and insertion of beta-barrel proteins into the outer membrane. The polypeptide is Outer membrane protein assembly factor BamE (Halomonas elongata (strain ATCC 33173 / DSM 2581 / NBRC 15536 / NCIMB 2198 / 1H9)).